Consider the following 650-residue polypeptide: Probable protein phosphatase 2C 36 (650 aa).

The segment at 146–166 (SGKKTKEKAKLKKSGSKSFTK) is disordered. Positions 148–166 (KKTKEKAKLKKSGSKSFTK) are enriched in basic residues. The 403-residue stretch at 239 to 641 (ESALEEPKIQ…DDVSVIVISL (403 aa)) folds into the PPM-type phosphatase domain. The Mn(2+) site is built by Asp276, Gly277, Asp569, and Asp632.

It belongs to the PP2C family. Mg(2+) is required as a cofactor. Requires Mn(2+) as cofactor.

The protein localises to the nucleus. The catalysed reaction is O-phospho-L-seryl-[protein] + H2O = L-seryl-[protein] + phosphate. The enzyme catalyses O-phospho-L-threonyl-[protein] + H2O = L-threonyl-[protein] + phosphate. This is Probable protein phosphatase 2C 36 (PLL3) from Arabidopsis thaliana (Mouse-ear cress).